A 100-amino-acid chain; its full sequence is Large ribosomal subunit protein uL23 (100 aa).

The protein belongs to the universal ribosomal protein uL23 family. As to quaternary structure, part of the 50S ribosomal subunit. Contacts protein L29, and trigger factor when it is bound to the ribosome.

Functionally, one of the early assembly proteins it binds 23S rRNA. One of the proteins that surrounds the polypeptide exit tunnel on the outside of the ribosome. Forms the main docking site for trigger factor binding to the ribosome. This chain is Large ribosomal subunit protein uL23, found in Buchnera aphidicola subsp. Acyrthosiphon pisum (strain 5A).